The primary structure comprises 308 residues: Shikimate kinase 1, chloroplastic (308 aa).

The N-terminal 62 residues, 1–62, are a transit peptide targeting the chloroplast; that stretch reads MEAGVGLALQ…RGSKPVAPLR (62 aa). Residue 103 to 110 participates in ATP binding; that stretch reads GMMGSGKS. A Mg(2+)-binding site is contributed by Ser110. Substrate-binding residues include Asp128, Arg153, and Gly175. Arg214 contacts ATP.

The protein belongs to the shikimate kinase family. Mg(2+) serves as cofactor. Expressed in panicles.

It localises to the plastid. Its subcellular location is the chloroplast. The catalysed reaction is shikimate + ATP = 3-phosphoshikimate + ADP + H(+). The protein operates within metabolic intermediate biosynthesis; chorismate biosynthesis; chorismate from D-erythrose 4-phosphate and phosphoenolpyruvate: step 5/7. Its function is as follows. Catalyzes the specific phosphorylation of the 3-hydroxyl group of shikimic acid using ATP as a cosubstrate. This is Shikimate kinase 1, chloroplastic (SK1) from Oryza sativa subsp. japonica (Rice).